Reading from the N-terminus, the 364-residue chain is GDSL esterase/lipase 7 (364 aa).

The signal sequence occupies residues 1–19 (MKSLLICLVLLELVWLGNG). The active-site Nucleophile is the Ser37. Residues Asn236, Asn237, and Asn264 are each glycosylated (N-linked (GlcNAc...) asparagine). Active-site residues include Asp329 and His332. Residue Asn351 is glycosylated (N-linked (GlcNAc...) asparagine).

Belongs to the 'GDSL' lipolytic enzyme family.

It is found in the secreted. The protein is GDSL esterase/lipase 7 (GLIP7) of Arabidopsis thaliana (Mouse-ear cress).